The following is a 203-amino-acid chain: Imidazoleglycerol-phosphate dehydratase (203 aa).

Belongs to the imidazoleglycerol-phosphate dehydratase family.

The protein resides in the cytoplasm. It catalyses the reaction D-erythro-1-(imidazol-4-yl)glycerol 3-phosphate = 3-(imidazol-4-yl)-2-oxopropyl phosphate + H2O. Its pathway is amino-acid biosynthesis; L-histidine biosynthesis; L-histidine from 5-phospho-alpha-D-ribose 1-diphosphate: step 6/9. The polypeptide is Imidazoleglycerol-phosphate dehydratase (Synechococcus sp. (strain RCC307)).